A 344-amino-acid chain; its full sequence is Zinc metalloproteinase nas-6 (344 aa).

Positions 1 to 19 are cleaved as a signal peptide; the sequence is MLDHVLLLTYCLVSTVVRS. The Peptidase M12A domain occupies 72–266; the sequence is NALKNKQLTW…VKINKLYSCK (195 aa). Intrachain disulfides connect cysteine 114–cysteine 265, cysteine 135–cysteine 154, cysteine 300–cysteine 334, cysteine 307–cysteine 327, and cysteine 314–cysteine 331. A Zn(2+)-binding site is contributed by histidine 162. Glutamate 163 is an active-site residue. Histidine 166 and histidine 172 together coordinate Zn(2+). The region spanning 300–334 is the ShKT domain; the sequence is CVDHFADCPHFAQYCTRASFFFVMKSYCPFTCKHC.

Zn(2+) serves as cofactor. Expressed in pharyngeal and body wall muscles, intestine, hypodermis and pharyngeal mc2 cells.

It is found in the secreted. Metalloprotease. The chain is Zinc metalloproteinase nas-6 (nas-6) from Caenorhabditis elegans.